A 93-amino-acid polypeptide reads, in one-letter code: Alpha-defensin 3 (93 aa).

The N-terminal stretch at 1–16 is a signal peptide; sequence MKTLVLLSALVLLAFQ. Positions 17–58 are excised as a propeptide; it reads VQADPIQNTDEETKTEEQPGEDDQAVSVSFGDPEGSSLQEES. The disordered stretch occupies residues 22-56; it reads IQNTDEETKTEEQPGEDDQAVSVSFGDPEGSSLQE. Cystine bridges form between cysteine 64-cysteine 92, cysteine 66-cysteine 81, and cysteine 71-cysteine 91.

Belongs to the alpha-defensin family. Paneth cells of the small bowel.

The protein resides in the secreted. Functionally, probably contributes to the antimicrobial barrier function of the small bowel mucosa. This chain is Alpha-defensin 3 (Defa3), found in Mus musculus (Mouse).